We begin with the raw amino-acid sequence, 137 residues long: Holo-[acyl-carrier-protein] synthase (137 aa).

Mg(2+)-binding residues include aspartate 8 and glutamate 57.

Belongs to the P-Pant transferase superfamily. AcpS family. Requires Mg(2+) as cofactor.

It is found in the cytoplasm. It carries out the reaction apo-[ACP] + CoA = holo-[ACP] + adenosine 3',5'-bisphosphate + H(+). In terms of biological role, transfers the 4'-phosphopantetheine moiety from coenzyme A to a Ser of acyl-carrier-protein. This Hyphomonas neptunium (strain ATCC 15444) protein is Holo-[acyl-carrier-protein] synthase.